A 545-amino-acid chain; its full sequence is Chaperonin GroEL 2 (545 aa).

ATP is bound by residues 30-33 (TLGP), K51, 87-91 (DGTTT), G415, and D496.

This sequence belongs to the chaperonin (HSP60) family. As to quaternary structure, forms a cylinder of 14 subunits composed of two heptameric rings stacked back-to-back. Interacts with the co-chaperonin GroES.

It localises to the cytoplasm. It catalyses the reaction ATP + H2O + a folded polypeptide = ADP + phosphate + an unfolded polypeptide.. Functionally, together with its co-chaperonin GroES, plays an essential role in assisting protein folding. The GroEL-GroES system forms a nano-cage that allows encapsulation of the non-native substrate proteins and provides a physical environment optimized to promote and accelerate protein folding. This Nitrobacter winogradskyi (strain ATCC 25391 / DSM 10237 / CIP 104748 / NCIMB 11846 / Nb-255) protein is Chaperonin GroEL 2.